The primary structure comprises 529 residues: Peptide chain release factor 3 (529 aa).

The region spanning Asn-11–Met-280 is the tr-type G domain. Residues Ser-20–Thr-27, Asp-88–His-92, and Asn-142–Asp-145 each bind GTP.

Belongs to the TRAFAC class translation factor GTPase superfamily. Classic translation factor GTPase family. PrfC subfamily.

The protein localises to the cytoplasm. In terms of biological role, increases the formation of ribosomal termination complexes and stimulates activities of RF-1 and RF-2. It binds guanine nucleotides and has strong preference for UGA stop codons. It may interact directly with the ribosome. The stimulation of RF-1 and RF-2 is significantly reduced by GTP and GDP, but not by GMP. This chain is Peptide chain release factor 3, found in Proteus mirabilis (strain HI4320).